A 464-amino-acid chain; its full sequence is C-terminal processing peptidase, chloroplastic (464 aa).

The N-terminal 32 residues, 1 to 32 (MHSRTNCLQTSVRAPQPHFRPFTAVKTCRQRC), are a transit peptide targeting the chloroplast. Residues 33–77 (STTAAAAKRDQAQEQQPWIQVGLGLAAAATAVAVGLGAAALPAQA) constitute a thylakoid transit peptide. One can recognise a PDZ domain in the interval 149–234 (LAALRRGTAG…SQVEVVLHAP (86 aa)). Active-site charge relay system residues include Ser372 and Lys397.

This sequence belongs to the peptidase S41A family. Monomer.

Its subcellular location is the plastid. It is found in the chloroplast thylakoid lumen. It carries out the reaction The enzyme shows specific recognition of a C-terminal tripeptide, Xaa-Yaa-Zaa, in which Xaa is preferably Ala or Leu, Yaa is preferably Ala or Tyr, and Zaa is preferably Ala, but then cleaves at a variable distance from the C-terminus. A typical cleavage is -Ala-Ala-|-Arg-Ala-Ala-Lys-Glu-Asn-Tyr-Ala-Leu-Ala-Ala.. With respect to regulation, not inhibited by antipain, 4-amidinophenylmethanesulfonyl fluoride, aprotinin, chymostatin, 3,4-dichloroisocoumarin, diisopropyl fluorophosphate, E64, EDTA, EGTA, iodoacetamide, leupeptin, pepstatin, o-phenanthroline, N-ethylmaleimide, phosphoramidon or phenylmethylsulfonyl fluoride. Protease involved in the C-terminal processing of the chloroplastic D1 protein of photosystem II. This proteolytic processing is necessary to allow the light-driven assembly of the tetranuclear manganese cluster, which is responsible for photosynthetic water oxidation. This is C-terminal processing peptidase, chloroplastic (ctpA) from Tetradesmus obliquus (Green alga).